A 479-amino-acid polypeptide reads, in one-letter code: Pup--protein ligase (479 aa).

Residue glutamate 17 coordinates Mg(2+). Arginine 62 lines the ATP pocket. Mg(2+) is bound at residue tyrosine 64. Residue aspartate 66 is the Proton acceptor of the active site. Glutamate 72 is a Mg(2+) binding site. ATP contacts are provided by serine 75 and tryptophan 432.

It belongs to the Pup ligase/Pup deamidase family. Pup-conjugating enzyme subfamily.

It carries out the reaction ATP + [prokaryotic ubiquitin-like protein]-L-glutamate + [protein]-L-lysine = ADP + phosphate + N(6)-([prokaryotic ubiquitin-like protein]-gamma-L-glutamyl)-[protein]-L-lysine.. It functions in the pathway protein degradation; proteasomal Pup-dependent pathway. The protein operates within protein modification; protein pupylation. In terms of biological role, catalyzes the covalent attachment of the prokaryotic ubiquitin-like protein modifier Pup to the proteasomal substrate proteins, thereby targeting them for proteasomal degradation. This tagging system is termed pupylation. The ligation reaction involves the side-chain carboxylate of the C-terminal glutamate of Pup and the side-chain amino group of a substrate lysine. The chain is Pup--protein ligase from Corynebacterium diphtheriae (strain ATCC 700971 / NCTC 13129 / Biotype gravis).